A 205-amino-acid polypeptide reads, in one-letter code: Probable thymidylate kinase (205 aa).

Residue 9–16 (GIDGVGKS) coordinates ATP.

The protein belongs to the thymidylate kinase family.

The catalysed reaction is dTMP + ATP = dTDP + ADP. The chain is Probable thymidylate kinase from Caldivirga maquilingensis (strain ATCC 700844 / DSM 13496 / JCM 10307 / IC-167).